The sequence spans 85 residues: Large ribosomal subunit protein bL27 (85 aa).

Positions 1–22 are disordered; that stretch reads MAHKKGASSTRNGRDSNAQRLG. Positions 7 to 19 are enriched in polar residues; that stretch reads ASSTRNGRDSNAQ.

It belongs to the bacterial ribosomal protein bL27 family.

The polypeptide is Large ribosomal subunit protein bL27 (Leifsonia xyli subsp. xyli (strain CTCB07)).